The primary structure comprises 329 residues: Two pore potassium channel protein sup-9 (329 aa).

Topologically, residues 1–8 are cytoplasmic; it reads MKRQNIRT. The chain crosses the membrane as a helical span at residues 9-29; sequence LSLIVCTLTYLLVGAAVFDAL. Asn-53 carries an N-linked (GlcNAc...) asparagine glycan. Positions 80-100 form an intramembrane region, pore-forming; the sequence is FSGAFYFATTVITTIGYGHST. The Selectivity filter motif lies at 93 to 98; it reads TIGYGH. A helical membrane pass occupies residues 108–128; it reads VFCMLYALAGIPLGLIMFQSI. Residues 129-157 are Cytoplasmic-facing; sequence GERMNTFAAKLLRFIRRAAGKQPIVTSSD. Residues 158–178 traverse the membrane as a helical segment; that stretch reads LIIFCTGWGGLLIFGGAFMFS. Asn-182 carries an N-linked (GlcNAc...) asparagine glycan. Positions 186–206 form an intramembrane region, pore-forming; sequence FDAVYYCFVTLTTIGFGDYVA. Residues 198-203 carry the Selectivity filter motif; sequence TIGFGD. A helical membrane pass occupies residues 220–240; it reads VFFSLVFILFGLTVISAAMNL. The Cytoplasmic portion of the chain corresponds to 241 to 329; the sequence is LVLRFLTMNT…FSGMTTRPKY (89 aa). Residues 289-296 form a may be important for regulation by and/or interaction with sup-10 region; it reads SLASCSCY. The tract at residues 307–329 is disordered; the sequence is HRKHTEPHGGPPTFSGMTTRPKY.

This sequence belongs to the two pore domain potassium channel (TC 1.A.1.8) family. May form a complex with the regulatory subunits unc-93 and sup-10. Low levels along surface of body-wall muscle cells, in vulval and intestinal muscles and, more weakly, in anal depressor and sphincter muscles. Also expressed in a subset of head neurons.

It localises to the membrane. Functionally, potassium channel involved in coordination of muscle contraction. Activity is regulated by sup-18. The chain is Two pore potassium channel protein sup-9 from Caenorhabditis elegans.